Consider the following 31-residue polypeptide: GCIKTGSFCTLSKGCCTKNCGWNFHCNPPNQ.

Cystine bridges form between cysteine 2–cysteine 16, cysteine 9–cysteine 20, and cysteine 15–cysteine 26. 4-hydroxyproline is present on residues proline 28 and proline 29.

The protein belongs to the nemertide family. In terms of tissue distribution, confined to the epidermis and to the mucus layer.

The protein resides in the secreted. Functionally, highly potent toxin against both insect and some mammalian sodium channels (Nav). It potently inhibits inactivation of insect sodium channels of B.germanica (BgNav1) (EC(50)=2.6 nM) and also delays the inactivation of mammalian Nav with potent activity on Nav1.1/SCN1A (hNav1.1/SCN1A; EC(50)=7.9 nM, rNav1.2/SCN2A; EC(50)=24.3 nM, rNav1.3/SCN3A; EC(50)=105.6 nM, rNav1.4/SCN4A; EC(50)=46.4 nM, hNav1.5/SCN5A; EC(50)=215.2 nM, mNav1.6/SCN8A; EC(50)=36.3 nM, hNav1.9/SCN9A; EC(50)=97.2 nM). 1 uM is enough to completely inhibits the inactivation, resulting in sustained non-inactivating currents. In addition, the toxin significantly enhances the recovery from inactivation, and the open state is not required for the toxin to interact with the channel. In vivo, injection into brine shrimp (Artemia salina) stops movement or causes death after 24 hours (EC(50)=2.8 uM). The chain is Nemertide alpha-6 from Lineus sanguineus (Ribbon worm).